The sequence spans 201 residues: Glycerol-3-phosphate acyltransferase (201 aa).

A run of 5 helical transmembrane segments spans residues 10–30 (MLIG…GLIL), 60–80 (LAAA…LIAA), 86–106 (AAIA…WIGF), 116–136 (LGVL…AWIV), and 166–186 (ALAA…RANI).

This sequence belongs to the PlsY family. In terms of assembly, probably interacts with PlsX.

The protein resides in the cell inner membrane. The catalysed reaction is an acyl phosphate + sn-glycerol 3-phosphate = a 1-acyl-sn-glycero-3-phosphate + phosphate. The protein operates within lipid metabolism; phospholipid metabolism. Its function is as follows. Catalyzes the transfer of an acyl group from acyl-phosphate (acyl-PO(4)) to glycerol-3-phosphate (G3P) to form lysophosphatidic acid (LPA). This enzyme utilizes acyl-phosphate as fatty acyl donor, but not acyl-CoA or acyl-ACP. The polypeptide is Glycerol-3-phosphate acyltransferase (Brucella canis (strain ATCC 23365 / NCTC 10854 / RM-666)).